We begin with the raw amino-acid sequence, 170 residues long: Ribosome maturation factor RimM (170 aa).

The 73-residue stretch at 98 to 170 folds into the PRC barrel domain; it reads PDEYYWVDLE…LIVVDWDPDF (73 aa).

This sequence belongs to the RimM family. As to quaternary structure, binds ribosomal protein uS19.

It localises to the cytoplasm. Functionally, an accessory protein needed during the final step in the assembly of 30S ribosomal subunit, possibly for assembly of the head region. Essential for efficient processing of 16S rRNA. May be needed both before and after RbfA during the maturation of 16S rRNA. It has affinity for free ribosomal 30S subunits but not for 70S ribosomes. In Xanthomonas oryzae pv. oryzae (strain MAFF 311018), this protein is Ribosome maturation factor RimM.